We begin with the raw amino-acid sequence, 140 residues long: Pro-vaccinia growth factor (140 aa).

The first 18 residues, 1 to 18, serve as a signal peptide directing secretion; sequence MSMKYLMLLFAAMIIRSF. Residues 19-100 lie on the Extracellular side of the membrane; sequence ADSGNAIETT…SENPNTTTSY (82 aa). N34 is a glycosylation site (N-linked (GlcNAc...) asparagine; by host). In terms of domain architecture, EGF-like spans 41–81; the sequence is AIRLCGPEGDGYCLHGDCIHARDIDGMYCRCSHGYTGIRCQ. 3 disulfides stabilise this stretch: C45-C58, C53-C69, and C71-C80. The N-linked (GlcNAc...) asparagine; by host glycan is linked to N95. A helical membrane pass occupies residues 101–121; sequence IPSPGIVLVLVGIIIITCCSL. At 122 to 140 the chain is on the cytoplasmic side; the sequence is SVYRFTRRTKLPIQDMVVP.

It belongs to the orthopoxvirus OPG019 family. Vaccinia growth factor interacts with host EGFR and promotes EGFR dimerization.

The protein resides in the host membrane. The protein localises to the secreted. In terms of biological role, stimulates cellular proliferation (hyperplasia)and mobility around infected cells to promote rapid and efficient spread of infection. This effect is beneficial for virus replication in vivo, because poxviruses replicate possibly better in proliferating cells than in quiescent cells. Acts by binding host EGFR, inducing its dimerization, autophosphorylation and leading to activation of several cellular pathways regulating cell proliferation or cell survival. The activation by host EGFR of mitogen activated protein kinases (MAPK) and extracellular-signal regulated kinases (ERK) are essential for the positive effect of vaccinia growth factor on poxvirus virulence in vivo. In Vaccinia virus (strain L-IVP) (VACV), this protein is Pro-vaccinia growth factor (OPG019).